Consider the following 440-residue polypeptide: Transposon Ty1-LR4 Gag polyprotein (440 aa).

Polar residues-rich tracts occupy residues 1–10 (MESQQLSQHP), 48–60 (TKAN…TPAS), and 127–152 (QSQF…GNTF). 3 disordered regions span residues 1 to 93 (MESQ…MMTQ), 126 to 173 (PQSQ…RPPP), and 352 to 440 (GSRN…PGTY). Low complexity predominate over residues 153 to 165 (TDSSSADSDMTST). An RNA-binding region spans residues 299 to 401 (NNGIHINNKV…NSKSKTARAH (103 aa)). A compositionally biased stretch (low complexity) spans 402–418 (NVSTSNNSPSTDNDSIS). Residue Ser-416 is modified to Phosphoserine. A compositionally biased stretch (polar residues) spans 419–428 (KSTTEPIQLN). The span at 429–440 (NKHDLHLRPGTY) shows a compositional bias: basic and acidic residues.

As to quaternary structure, homotrimer.

Its subcellular location is the cytoplasm. In terms of biological role, capsid protein (CA) is the structural component of the virus-like particle (VLP), forming the shell that encapsulates the retrotransposons dimeric RNA genome. The particles are assembled from trimer-clustered units and there are holes in the capsid shells that allow for the diffusion of macromolecules. CA also has nucleocapsid-like chaperone activity, promoting primer tRNA(i)-Met annealing to the multipartite primer-binding site (PBS), dimerization of Ty1 RNA and initiation of reverse transcription. This Saccharomyces cerevisiae (strain ATCC 204508 / S288c) (Baker's yeast) protein is Transposon Ty1-LR4 Gag polyprotein (TY1A-LR4).